Here is a 273-residue protein sequence, read N- to C-terminus: 4-hydroxy-tetrahydrodipicolinate reductase (273 aa).

NAD(+)-binding positions include 12 to 17 (GAGGRM) and Glu38. Arg39 contacts NADP(+). NAD(+)-binding positions include 102–104 (GTT) and 126–129 (AANF). The active-site Proton donor/acceptor is His159. A (S)-2,3,4,5-tetrahydrodipicolinate-binding site is contributed by His160. Lys163 serves as the catalytic Proton donor. 169–170 (GT) provides a ligand contact to (S)-2,3,4,5-tetrahydrodipicolinate.

This sequence belongs to the DapB family. As to quaternary structure, homotetramer.

Its subcellular location is the cytoplasm. The enzyme catalyses (S)-2,3,4,5-tetrahydrodipicolinate + NAD(+) + H2O = (2S,4S)-4-hydroxy-2,3,4,5-tetrahydrodipicolinate + NADH + H(+). It carries out the reaction (S)-2,3,4,5-tetrahydrodipicolinate + NADP(+) + H2O = (2S,4S)-4-hydroxy-2,3,4,5-tetrahydrodipicolinate + NADPH + H(+). The protein operates within amino-acid biosynthesis; L-lysine biosynthesis via DAP pathway; (S)-tetrahydrodipicolinate from L-aspartate: step 4/4. Functionally, catalyzes the conversion of 4-hydroxy-tetrahydrodipicolinate (HTPA) to tetrahydrodipicolinate. The sequence is that of 4-hydroxy-tetrahydrodipicolinate reductase from Salmonella choleraesuis (strain SC-B67).